A 386-amino-acid chain; its full sequence is GTPase Obg (386 aa).

One can recognise an Obg domain in the interval 1–159 (MKFVDEAKIK…RNLLLELLLL (159 aa)). The 174-residue stretch at 160–333 (ADVGMLGLPN…LCRDVVEYLE (174 aa)) folds into the OBG-type G domain. GTP contacts are provided by residues 166–173 (GLPNAGKS), 191–195 (FTTLV), 213–216 (DIPG), 283–286 (NKTD), and 314–316 (AAI). Mg(2+) contacts are provided by Ser-173 and Thr-193.

Belongs to the TRAFAC class OBG-HflX-like GTPase superfamily. OBG GTPase family. As to quaternary structure, monomer. Mg(2+) serves as cofactor.

It localises to the cytoplasm. An essential GTPase which binds GTP, GDP and possibly (p)ppGpp with moderate affinity, with high nucleotide exchange rates and a fairly low GTP hydrolysis rate. Plays a role in control of the cell cycle, stress response, ribosome biogenesis and in those bacteria that undergo differentiation, in morphogenesis control. This chain is GTPase Obg, found in Psychromonas ingrahamii (strain DSM 17664 / CCUG 51855 / 37).